We begin with the raw amino-acid sequence, 625 residues long: uncharacterized protein (625 aa).

Positions 23–51 (CLACRRKKLKCDHGRPCSNCLKRSTIQSC) form a DNA-binding region, zn(2)-C6 fungal-type. Over residues 93-113 (GTKSQSDYENQQSHNLPSTPS) the composition is skewed to polar residues. The segment at 93–119 (GTKSQSDYENQQSHNLPSTPSADAETQ) is disordered.

Its subcellular location is the nucleus. It localises to the cytoplasm. The protein localises to the cytoskeleton. The protein resides in the spindle. This is an uncharacterized protein from Schizosaccharomyces pombe (strain 972 / ATCC 24843) (Fission yeast).